A 334-amino-acid polypeptide reads, in one-letter code: UDP-N-acetylglucosamine 4,6-dehydratase (inverting) (334 aa).

Residues T13–F16, S37–K42, D61–V62, A81, K85, and L123–S124 contribute to the NADP(+) site. K85 provides a ligand contact to substrate. K127 is an active-site residue. NADP(+) contacts are provided by Y135 and K139. N167 provides a ligand contact to substrate. Residue V168–R172 coordinates NADP(+). V175, T193, R252, and E255 together coordinate substrate.

This sequence belongs to the polysaccharide synthase family. In terms of assembly, homohexamer. It depends on NADP(+) as a cofactor.

The catalysed reaction is UDP-N-acetyl-alpha-D-glucosamine = UDP-2-acetamido-2,6-dideoxy-beta-L-arabino-hex-4-ulose + H2O. Its function is as follows. Catalyzes the first step in the biosynthesis of pseudaminic acid, a sialic-acid-like sugar that is used to modify flagellin. Has both C6 dehydratase and C5 epimerase activities that result in the production of both UDP-2-acetamido-2,6-dideoxy-beta-L-arabino-4-hexulose and UDP-2-acetamido-2,6-dideoxy-alpha-D-xylo-4-hexulose. The sequence is that of UDP-N-acetylglucosamine 4,6-dehydratase (inverting) (pseB) from Campylobacter jejuni subsp. jejuni serotype O:23/36 (strain 81-176).